The chain runs to 188 residues: CASP-like protein 4B1 (188 aa).

A disordered region spans residues 1–34 (MTNPDNMKPVEATDVESAAEKTSEPTPASGTSTI). Over 1–46 (MTNPDNMKPVEATDVESAAEKTSEPTPASGTSTITQRWKREDLIKK) the chain is Cytoplasmic. The segment covering 24-34 (EPTPASGTSTI) has biased composition (polar residues). A helical transmembrane segment spans residues 47 to 67 (ASPITRGICLLFSLIAFLIMV). Topologically, residues 68-84 (SNKHGYGRNFNDYEEYR) are extracellular. Residues 85 to 105 (YVLAISIISTLYTAWQTFAHF) traverse the membrane as a helical segment. Over 106–124 (SKREIFDRRTSILVDFSGD) the chain is Cytoplasmic. The helical transmembrane segment at 125–145 (QIVAYLLISAASSAIPLTNIF) threads the bilayer. At 146-156 (REGQDNIFTDS) the chain is on the extracellular side. Residues 157–177 (AASAISMAIFAFIALALSALF) form a helical membrane-spanning segment. The Cytoplasmic segment spans residues 178 to 188 (SGYKLSTHSFI).

The protein belongs to the Casparian strip membrane proteins (CASP) family. As to quaternary structure, homodimer and heterodimers.

It localises to the cell membrane. The sequence is that of CASP-like protein 4B1 from Arabidopsis thaliana (Mouse-ear cress).